We begin with the raw amino-acid sequence, 294 residues long: MAGQPAATGSPSADKDGMEPNVVARISQWADDHLRLVRNISTGMAIAGIMLLLRSIRLTSKFTSSSDIPVEFIRRNVKLRGRLRRITENGLEIEHIPITLPIIASLRKEPRGALLVKLAGVELAETGKAWLQKELKPSQLLWFQLLGKENSALFCYLLVSKGGYFSVNLNEEILRRGLGKTVLVKGLKYDSKIYWTVHRNLLKAELTALKKGEGIWKEDSEKESYLEKFKDSWREIWKKDSFLKTTGSDFSLKKESYYEKLKRTYEIWKDNMNNCSLILKFRELISRINFRRKG.

Residue alanine 2 is modified to N-acetylalanine. Residues 40-56 form a helical membrane-spanning segment; it reads ISTGMAIAGIMLLLRSI.

In terms of tissue distribution, highly expressed in ileocecal tissue and endometrium.

It is found in the membrane. The protein resides in the secreted. Its function is as follows. Secreted protein may play a role in transcription regulation via the MAPK3/MAPK1 pathway through an unidentified receptor on the plasma membrane. In Homo sapiens (Human), this protein is Protein C3orf33 (C3orf33).